Consider the following 537-residue polypeptide: ESX-2 secretion system protein EccE2 (537 aa).

The chain crosses the membrane as a helical span at residues 31–51 (ALGGQLGAVMAVVVGVALVFV).

Belongs to the EccE family. As to quaternary structure, could be part of the ESX-2 / type VII secretion system (T7SS), which is composed of cytosolic and membrane components.

It is found in the cell membrane. This is ESX-2 secretion system protein EccE2 (eccE2) from Mycobacterium tuberculosis (strain CDC 1551 / Oshkosh).